Consider the following 146-residue polypeptide: 3-dehydroquinate dehydratase (146 aa).

The Proton acceptor role is filled by Y23. Substrate contacts are provided by N74, H80, and D87. H100 functions as the Proton donor in the catalytic mechanism. Residues 101–102 (IS) and R111 each bind substrate.

This sequence belongs to the type-II 3-dehydroquinase family. As to quaternary structure, homododecamer.

The catalysed reaction is 3-dehydroquinate = 3-dehydroshikimate + H2O. Its pathway is metabolic intermediate biosynthesis; chorismate biosynthesis; chorismate from D-erythrose 4-phosphate and phosphoenolpyruvate: step 3/7. In terms of biological role, catalyzes a trans-dehydration via an enolate intermediate. In Bacillus cytotoxicus (strain DSM 22905 / CIP 110041 / 391-98 / NVH 391-98), this protein is 3-dehydroquinate dehydratase.